The chain runs to 1275 residues: Mediator of RNA polymerase II transcription subunit 33B (1275 aa).

Low complexity predominate over residues 772–791 (GSQSLTPSSGSSSLSTSGGD). The segment at 772-792 (GSQSLTPSSGSSSLSTSGGDD) is disordered.

The protein belongs to the Mediator complex subunit 33 family. Component of the Mediator complex. Ubiquitous.

The protein resides in the nucleus. Functionally, component of the Mediator complex, a coactivator involved in the regulated transcription of nearly all RNA polymerase II-dependent genes. Mediator functions as a bridge to convey information from gene-specific regulatory proteins to the basal RNA polymerase II transcription machinery. The Mediator complex, having a compact conformation in its free form, is recruited to promoters by direct interactions with regulatory proteins and serves for the assembly of a functional preinitiation complex with RNA polymerase II and the general transcription factors. Involved in the repression of phenylpropanoid biosynthesis. May compete with MED33B for common binding partners or for occupancy in Mediator. The chain is Mediator of RNA polymerase II transcription subunit 33B (MED33B) from Arabidopsis thaliana (Mouse-ear cress).